Reading from the N-terminus, the 713-residue chain is Macrophage-expressed gene 1 protein (713 aa).

The signal sequence occupies residues 1 to 19 (MNSFMALVLIWMIIACAEA). Residues 30-345 (GFQICKNALK…TAVRHYYTFN (316 aa)) form the MACPF domain. A disulfide bridge connects residues cysteine 34 and cysteine 70. 2 beta stranded membrane-spanning segments follow: residues 113–120 (LSINTELA) and 127–132 (GKFSTE). Residue asparagine 185 is glycosylated (N-linked (GlcNAc...) asparagine). Transmembrane regions (beta stranded) follow at residues 235-244 (TVTASAGIAF) and 248-256 (VNFKVETDY). The N-linked (GlcNAc...) asparagine glycan is linked to asparagine 269. Cysteine 350 and cysteine 369 form a disulfide bridge. N-linked (GlcNAc...) asparagine glycosylation is present at asparagine 375. Intrachain disulfides connect cysteine 385–cysteine 394, cysteine 432–cysteine 446, cysteine 436–cysteine 442, cysteine 531–cysteine 569, and cysteine 554–cysteine 574. Residues 410–653 (PPGYSPVHLL…GDSNGMSGGE (244 aa)) form a P2 region. Residues 654–674 (AAGITLGVTIALGIVITLAIY) form a helical membrane-spanning segment.

It belongs to the MPEG1 family. As to quaternary structure, homooligomer; predominantly forms a homooligomeric arc-shaped pore complex instead of complete rings of 16 subunits. Proteolytically processed in two steps to generate the Macrophage-expressed gene 1 protein, processed form: cleaved by trypsin in proximity of the helical transmembrane domain releases the ectodomain into the lysosomal lumen to orient the pore-forming domain toward the endogenous membranes, and processed by the asparagine endopeptidase (LGMN). Proteolytic processing in antigen-containing vesicles is pH-dependent. In terms of processing, monoubiquitinated in response to bacterial infection; ubiquitination is required for vesicular localization and antibacterial activity and can be blocked by bacterial cell cycle inhibiting factor (cif). In terms of tissue distribution, expressed constitutively in a variety of cell types including macrophages, microglia, neutrophils, T cells, marginal zone B cells, keratinocytes, splenocytes and intestinal epithelial cells.

It localises to the cytoplasmic vesicle membrane. Its subcellular location is the cytoplasmic vesicle. The protein localises to the phagosome membrane. Forms arc- and ring-shaped pre-pores on top of the membrane at neutral to slightly acidic pH conditions and converts to pores upon acidification. Undergoes transition from the pre-pore to the pore in a processive clockwise hand-over-hand process. In the pore state, 2 alpha-helical regions refold into transmembrane hairpins (TMH1 and TMH2) in each protomer that form in the ensemble complex giant beta-barrel transmembrane pores. Its function is as follows. Pore-forming protein involved in both innate and adaptive immunity. Plays a central role in antigen cross-presentation in dendritic cells by forming a pore in antigen-containing compartments, thereby promoting delivery of antigens for cross-presentation. Also involved in innate immune response following bacterial infection; shows antibacterial activity against a wide spectrum of Gram-positive, Gram-negative and acid-fast bacteria. Reduces the viability of the intracytosolic pathogen L.monocytogenes by inhibiting acidification of the phagocytic vacuole of host cells which restricts bacterial translocation from the vacuole to the cytosol. Required for the antibacterial activity of reactive oxygen species and nitric oxide. Pore-forming protein that plays a central role in antigen cross-presentation in dendritic cells by mediating delivery of antigens for cross-presentation. Dendritic cells bridge innate and adaptive immunity by capturing exogenous antigens on MHC class-I molecules and presenting them to naive CD8(+) T-cells. Acts by forming a pore in antigen-containing compartments, promoting the release of antigens into the cytosol, enabling generation of MHCI:peptide complexes and T-cell priming. This chain is Macrophage-expressed gene 1 protein, found in Mus musculus (Mouse).